The sequence spans 1689 residues: DNA-directed RNA polymerase I subunit rpa1 (1689 aa).

Positions 63, 66, 73, and 76 each coordinate Zn(2+). A phosphoserine mark is found at Ser159 and Ser161. The segment covering 269 to 280 (VLRDTSKKHHED) has biased composition (basic and acidic residues). The disordered stretch occupies residues 269-295 (VLRDTSKKHHEDEGYDGDSDSSNESEV). Residues 281-295 (EGYDGDSDSSNESEV) are compositionally biased toward acidic residues. The Mg(2+) site is built by Asp643, Asp645, and Asp647. Residues 1005 to 1017 (PQEYYFHCMAGRE) are bridging helix. Positions 1346–1440 (RKSGGKDDTV…EEDEGFKSDE (95 aa)) are disordered. A phosphoserine mark is found at Ser1438 and Ser1441.

Belongs to the RNA polymerase beta' chain family. Component of the RNA polymerase I (Pol I) complex consisting of at least 13 subunits.

It localises to the nucleus. Its subcellular location is the nucleolus. It catalyses the reaction RNA(n) + a ribonucleoside 5'-triphosphate = RNA(n+1) + diphosphate. Functionally, DNA-dependent RNA polymerase catalyzes the transcription of DNA into RNA using the four ribonucleoside triphosphates as substrates. Largest and catalytic core component of RNA polymerase I which synthesizes ribosomal RNA precursors. Forms the polymerase active center together with the second largest subunit. A single stranded DNA template strand of the promoter is positioned within the central active site cleft of Pol I. A bridging helix emanates from RPA1 and crosses the cleft near the catalytic site and is thought to promote translocation of Pol I by acting as a ratchet that moves the RNA-DNA hybrid through the active site by switching from straight to bent conformations at each step of nucleotide addition. The polypeptide is DNA-directed RNA polymerase I subunit rpa1 (rpa1) (Schizosaccharomyces pombe (strain 972 / ATCC 24843) (Fission yeast)).